We begin with the raw amino-acid sequence, 295 residues long: MNLSGLNMRGLLLADEPMSRHTSLRVGGPADLFAIPEDADDLQGLLRQLKERGIPWLAIGRGNNLLVRDSGIRGAVISLERFNRVEALGQGRIRAGAGAENLAVVRFAQEQGLGGIGFISGIPGTVGGAIRMNAGAYGTGIMERTESLTLLHDGNVREFGRDELEYGYRHLDLAAGDIILEALFRLDQREAEQTEEEIRKDLELRRAKHSVGFPSAGSFFKNPAGQTAWRLIDATGMRGERVGGAQVSQVHSNFLVNTGGATAGDFLELSRVVKKAVLASCGVTLEEEVRIVGEE.

The FAD-binding PCMH-type domain occupies 25–189; that stretch reads RVGGPADLFA…LEALFRLDQR (165 aa). Arg-169 is a catalytic residue. Ser-218 acts as the Proton donor in catalysis. Glu-288 is a catalytic residue.

It belongs to the MurB family. FAD serves as cofactor.

Its subcellular location is the cytoplasm. The catalysed reaction is UDP-N-acetyl-alpha-D-muramate + NADP(+) = UDP-N-acetyl-3-O-(1-carboxyvinyl)-alpha-D-glucosamine + NADPH + H(+). The protein operates within cell wall biogenesis; peptidoglycan biosynthesis. Its function is as follows. Cell wall formation. This Pelobacter propionicus (strain DSM 2379 / NBRC 103807 / OttBd1) protein is UDP-N-acetylenolpyruvoylglucosamine reductase.